A 344-amino-acid polypeptide reads, in one-letter code: 2-methyl-6-phytyl-1,4-hydroquinone methyltransferase, chloroplastic (344 aa).

The transit peptide at 1–62 directs the protein to the chloroplast; that stretch reads MACSMLNGVD…LTTVTKCTLS (62 aa). Residues 63–313 are Chloroplast intermembrane-facing; that stretch reads ASERPASQPR…PVHPLVFLYR (251 aa). The SAM motif I stretch occupies residues 121-130; the sequence is VVDVGGGTGF. The segment at 166 to 179 is SAM motif II; sequence CRIIEGDAEDLPFP. The SAM motif III stretch occupies residues 207 to 220; that stretch reads RVLKLGGKACLIGP. The chain crosses the membrane as a helical span at residues 314-334; sequence FLLGALASTYYVLVPIYMWIK. Residues 335 to 344 are Stromal-facing; it reads DKIFPKGMPL.

The protein belongs to the class I-like SAM-binding methyltransferase superfamily. MPBQ/MBSQ MT family.

The protein resides in the plastid. Its subcellular location is the chloroplast inner membrane. It catalyses the reaction 2-methyl-6-phytyl-1,4-benzene-1,4-diol + S-adenosyl-L-methionine = 2,3-dimethyl-6-phytylbenzene-1,4-diol + S-adenosyl-L-homocysteine + H(+). The enzyme catalyses 2-methyl-6-(all-trans-nonaprenyl)benzene-1,4-diol + S-adenosyl-L-methionine = plastoquinol-9 + S-adenosyl-L-homocysteine + H(+). The catalysed reaction is 6-geranylgeranyl-2-methylbenzene-1,4-diol + S-adenosyl-L-methionine = 6-geranylgeranyl-2,3-dimethylbenzene-1,4-diol + S-adenosyl-L-homocysteine + H(+). The protein operates within cofactor biosynthesis; tocopherol biosynthesis. Its function is as follows. Involved in a key methylation step in both tocopherols (vitamin E) and plastoquinone synthesis. Catalyzes the conversion of 2-methyl-6-phytyl-1,4-hydroquinone (MPBQ) to 2,3-dimethyl-6-phytyl-1,4-hydroquinone (DMPQ, a substrate for tocopherol cyclase), and 2-methyl-6-solanyl-1,4-benzoquinone (MSBQ) to plastoquinone. The protein is 2-methyl-6-phytyl-1,4-hydroquinone methyltransferase, chloroplastic of Spinacia oleracea (Spinach).